Consider the following 235-residue polypeptide: Regulator of G-protein signaling 18 (235 aa).

S49 carries the phosphoserine modification. The region spanning 86-202 is the RGS domain; the sequence is SFDKLLSHRD…LKSEIYLHLI (117 aa). 2 positions are modified to phosphoserine: S216 and S218.

The protein localises to the cytoplasm. In terms of biological role, inhibits signal transduction by increasing the GTPase activity of G protein alpha subunits thereby driving them into their inactive GDP-bound form. Binds to G(i) alpha-1, G(i) alpha-2, G(i) alpha-3 and G(q) alpha. This is Regulator of G-protein signaling 18 (Rgs18) from Rattus norvegicus (Rat).